The sequence spans 318 residues: Aspartate carbamoyltransferase catalytic subunit (318 aa).

Arginine 67 and threonine 68 together coordinate carbamoyl phosphate. Lysine 95 provides a ligand contact to L-aspartate. Carbamoyl phosphate-binding residues include arginine 117, histidine 145, and glutamine 148. L-aspartate contacts are provided by arginine 178 and arginine 236. Glycine 277 and proline 278 together coordinate carbamoyl phosphate.

This sequence belongs to the aspartate/ornithine carbamoyltransferase superfamily. ATCase family. Heterododecamer (2C3:3R2) of six catalytic PyrB chains organized as two trimers (C3), and six regulatory PyrI chains organized as three dimers (R2).

It carries out the reaction carbamoyl phosphate + L-aspartate = N-carbamoyl-L-aspartate + phosphate + H(+). Its pathway is pyrimidine metabolism; UMP biosynthesis via de novo pathway; (S)-dihydroorotate from bicarbonate: step 2/3. In terms of biological role, catalyzes the condensation of carbamoyl phosphate and aspartate to form carbamoyl aspartate and inorganic phosphate, the committed step in the de novo pyrimidine nucleotide biosynthesis pathway. This chain is Aspartate carbamoyltransferase catalytic subunit, found in Roseiflexus sp. (strain RS-1).